A 511-amino-acid polypeptide reads, in one-letter code: MPPSCTNSTQENNGSRVCLPLSKMPISVAHGIIRSVVLLVILGVAFLGNVVLGYVLHRKPNLLQVTNRFIFNLLVTDLLQVALVAPWVVSTAIPFFWPLNIHFCTALVSLTHLFAFASVNTIVVVSVDRYLTIIHPLSYPSKMTNRRSYILLYGTWIAAFLQSTPPLYGWGHATFDDRNAFCSMIWGASPAYTVVSVVSFLVIPLGVMIACYSVVFGAARRQQALLYKAKSHRLEVRVEDSVVHENEEGAKKRDEFQDKNEFQGQDGGGQAEAKGSSSMEESPMVAEGSSQKTGKGSLDFSAGIMEGKDSDEVSNGSMEGLEVITEFQASSAKADTGRIDANQCNIDVGEDDVEFGMDEIHFNDDVEAMRIPESSPPSRRNSTSDPPLPPCYECKAARVIFVIISTYVLSLGPYCFLAVLAVWVDIDTRVPQWVITIIIWLFFLQCCIHPYVYGYMHKSIKKEIQEVLKKLICKKSPPVEDSHPDLHETEAGTEGGIEGKAVPSHDSATSP.

Residues 1–35 lie on the Extracellular side of the membrane; the sequence is MPPSCTNSTQENNGSRVCLPLSKMPISVAHGIIRS. 2 N-linked (GlcNAc...) asparagine glycosylation sites follow: Asn-7 and Asn-13. Residues 36–56 traverse the membrane as a helical segment; sequence VVLLVILGVAFLGNVVLGYVL. At 57–67 the chain is on the cytoplasmic side; sequence HRKPNLLQVTN. A helical transmembrane segment spans residues 68 to 90; it reads RFIFNLLVTDLLQVALVAPWVVS. Residues 91 to 106 lie on the Extracellular side of the membrane; that stretch reads TAIPFFWPLNIHFCTA. Cysteines 104 and 182 form a disulfide. The helical transmembrane segment at 107–127 threads the bilayer; it reads LVSLTHLFAFASVNTIVVVSV. Topologically, residues 128 to 149 are cytoplasmic; it reads DRYLTIIHPLSYPSKMTNRRSY. A helical transmembrane segment spans residues 150–170; the sequence is ILLYGTWIAAFLQSTPPLYGW. Residues 171 to 196 lie on the Extracellular side of the membrane; it reads GHATFDDRNAFCSMIWGASPAYTVVS. A helical transmembrane segment spans residues 197–217; it reads VVSFLVIPLGVMIACYSVVFG. Residues 218 to 398 lie on the Cytoplasmic side of the membrane; sequence AARRQQALLY…PPCYECKAAR (181 aa). A compositionally biased stretch (basic and acidic residues) spans 240 to 261; it reads DSVVHENEEGAKKRDEFQDKNE. Disordered regions lie at residues 240 to 315 and 367 to 386; these read DSVV…EVSN and EAMR…TSDP. The segment covering 376 to 385 has biased composition (polar residues); sequence PPSRRNSTSD. The helical transmembrane segment at 399 to 419 threads the bilayer; that stretch reads VIFVIISTYVLSLGPYCFLAV. The Extracellular segment spans residues 420-432; the sequence is LAVWVDIDTRVPQ. A helical membrane pass occupies residues 433-453; sequence WVITIIIWLFFLQCCIHPYVY. Topologically, residues 454–511 are cytoplasmic; it reads GYMHKSIKKEIQEVLKKLICKKSPPVEDSHPDLHETEAGTEGGIEGKAVPSHDSATSP. The tract at residues 476-511 is disordered; sequence SPPVEDSHPDLHETEAGTEGGIEGKAVPSHDSATSP. Residues 477–490 are compositionally biased toward basic and acidic residues; the sequence is PPVEDSHPDLHETE.

Belongs to the G-protein coupled receptor 1 family. Expressed in the brain in hypothalamus.

The protein localises to the cell membrane. Orphan receptor. This chain is Probable G-protein coupled receptor 101 (Gpr101), found in Mus musculus (Mouse).